The following is a 529-amino-acid chain: Peptide chain release factor 3 (529 aa).

The tr-type G domain maps to 11–279; sequence AKRRTFAIIS…GLVDWAPKPQ (269 aa). Residues 20–27, 88–92, and 142–145 contribute to the GTP site; these read SHPDAGKT, DTPGH, and NKLD.

Belongs to the TRAFAC class translation factor GTPase superfamily. Classic translation factor GTPase family. PrfC subfamily.

The protein resides in the cytoplasm. In terms of biological role, increases the formation of ribosomal termination complexes and stimulates activities of RF-1 and RF-2. It binds guanine nucleotides and has strong preference for UGA stop codons. It may interact directly with the ribosome. The stimulation of RF-1 and RF-2 is significantly reduced by GTP and GDP, but not by GMP. This chain is Peptide chain release factor 3, found in Idiomarina loihiensis (strain ATCC BAA-735 / DSM 15497 / L2-TR).